A 200-amino-acid polypeptide reads, in one-letter code: Probable molybdenum cofactor guanylyltransferase (200 aa).

GTP-binding positions include 8 to 10 (LAG), Lys-20, Asp-66, and Asp-97. Residue Asp-97 participates in Mg(2+) binding.

It belongs to the MobA family. It depends on Mg(2+) as a cofactor.

It is found in the cytoplasm. It carries out the reaction Mo-molybdopterin + GTP + H(+) = Mo-molybdopterin guanine dinucleotide + diphosphate. In terms of biological role, transfers a GMP moiety from GTP to Mo-molybdopterin (Mo-MPT) cofactor (Moco or molybdenum cofactor) to form Mo-molybdopterin guanine dinucleotide (Mo-MGD) cofactor. The protein is Probable molybdenum cofactor guanylyltransferase of Bacillus velezensis (strain DSM 23117 / BGSC 10A6 / LMG 26770 / FZB42) (Bacillus amyloliquefaciens subsp. plantarum).